Consider the following 895-residue polypeptide: Protein translocase subunit SecA (895 aa).

ATP is bound by residues Gln-90, 108–112 (GEGKS), and Asp-498.

The protein belongs to the SecA family.

It localises to the plastid. The protein resides in the chloroplast stroma. Its subcellular location is the chloroplast thylakoid membrane. It catalyses the reaction ATP + H2O + cellular proteinSide 1 = ADP + phosphate + cellular proteinSide 2.. Has a central role in coupling the hydrolysis of ATP to the transfer of proteins across the thylakoid membrane. The polypeptide is Protein translocase subunit SecA (Cyanidium caldarium (Red alga)).